Here is a 102-residue protein sequence, read N- to C-terminus: MNGQNIRIRLKAFDHRILDTSTKEIVSTAKRTGAQVRGPIPLPTKIEKFTVNRSPHVDKKSREQFEIRTHKRVLDIVDPTPQTVDALMKLDLAAGVDVEIKL.

This sequence belongs to the universal ribosomal protein uS10 family. Part of the 30S ribosomal subunit.

Involved in the binding of tRNA to the ribosomes. This is Small ribosomal subunit protein uS10 from Beijerinckia indica subsp. indica (strain ATCC 9039 / DSM 1715 / NCIMB 8712).